A 1125-amino-acid chain; its full sequence is Transcription-repair-coupling factor (1125 aa).

In terms of domain architecture, Helicase ATP-binding spans 597 to 758 (DMMSFKVMDR…LIKLRDISVL (162 aa)). 610–617 (GDVGFGKT) serves as a coordination point for ATP. The short motif at 711-714 (DEEQ) is the DEEQ box element. In terms of domain architecture, Helicase C-terminal spans 774–933 (SFSELLIKHA…GFKIAMKDME (160 aa)).

In the N-terminal section; belongs to the UvrB family. It in the C-terminal section; belongs to the helicase family. RecG subfamily.

It localises to the cytoplasm. Couples transcription and DNA repair by recognizing RNA polymerase (RNAP) stalled at DNA lesions. Mediates ATP-dependent release of RNAP and its truncated transcript from the DNA, and recruitment of nucleotide excision repair machinery to the damaged site. This is Transcription-repair-coupling factor from Borreliella burgdorferi (strain ATCC 35210 / DSM 4680 / CIP 102532 / B31) (Borrelia burgdorferi).